The sequence spans 414 residues: Serine/threonine transporter SstT (414 aa).

Topologically, residues 2-15 (TTQRSPGLFRRLAH) are cytoplasmic. A helical transmembrane segment spans residues 16 to 36 (GSLVKQILVGLVLGILLAWIS). Topologically, residues 37–45 (KPAAEAVGL) are periplasmic. A helical membrane pass occupies residues 46-66 (LGTLFVGALKAVAPILVLMLV). Over 67–83 (MASIANHQHGQKTNIRP) the chain is Cytoplasmic. The helical transmembrane segment at 84–104 (ILFLYLLGTFSAALAAVVFSF) threads the bilayer. The Periplasmic segment spans residues 105 to 142 (AFPSTLHLSSSAGDISPPSGIVEVMRGLVMSMVSNPID). Residues 143–163 (ALLKGNYIGILVWAIGLGFAL) form a helical membrane-spanning segment. Residues 164 to 179 (RHGNETTKNLVNDMSN) are Cytoplasmic-facing. A helical transmembrane segment spans residues 180–200 (AVTFMVKLVIRFAPIGIFGLV). Over 201 to 217 (SSTLATTGFSTLWGYAQ) the chain is Periplasmic. A helical transmembrane segment spans residues 218-238 (LLVVLVGCMLLVALVVNPLLV). The Cytoplasmic portion of the chain corresponds to 239-299 (WWKIRRNPFP…VSIPLGATIN (61 aa)). Residues 300 to 320 (MAGAAITITVLTLAAVNTLGI) traverse the membrane as a helical segment. Residues 321–331 (PVDLPTALLLS) lie on the Periplasmic side of the membrane. Residues 332-352 (VVASLCACGASGVAGGSLLLI) form a helical membrane-spanning segment. Residues 353-414 (PLACNMFGIS…DRLANSALRN (62 aa)) lie on the Cytoplasmic side of the membrane.

This sequence belongs to the dicarboxylate/amino acid:cation symporter (DAACS) (TC 2.A.23) family.

Its subcellular location is the cell inner membrane. It carries out the reaction L-serine(in) + Na(+)(in) = L-serine(out) + Na(+)(out). It catalyses the reaction L-threonine(in) + Na(+)(in) = L-threonine(out) + Na(+)(out). In terms of biological role, involved in the import of serine and threonine into the cell, with the concomitant import of sodium (symport system). This is Serine/threonine transporter SstT from Shigella flexneri serotype 5b (strain 8401).